A 1315-amino-acid chain; its full sequence is DNA-directed RNA polymerase subunit beta' (1315 aa).

Cys60, Cys62, Cys75, and Cys78 together coordinate Zn(2+). 3 residues coordinate Mg(2+): Asp535, Asp537, and Asp539. Residues Cys890, Cys967, Cys974, and Cys977 each coordinate Zn(2+).

It belongs to the RNA polymerase beta' chain family. The RNAP catalytic core consists of 2 alpha, 1 beta, 1 beta' and 1 omega subunit. When a sigma factor is associated with the core the holoenzyme is formed, which can initiate transcription. Mg(2+) serves as cofactor. It depends on Zn(2+) as a cofactor.

The catalysed reaction is RNA(n) + a ribonucleoside 5'-triphosphate = RNA(n+1) + diphosphate. In terms of biological role, DNA-dependent RNA polymerase catalyzes the transcription of DNA into RNA using the four ribonucleoside triphosphates as substrates. The protein is DNA-directed RNA polymerase subunit beta' of Mycobacterium sp. (strain MCS).